The primary structure comprises 376 residues: Lipid-A-disaccharide synthase (376 aa).

Belongs to the LpxB family.

It carries out the reaction a lipid X + a UDP-2-N,3-O-bis[(3R)-3-hydroxyacyl]-alpha-D-glucosamine = a lipid A disaccharide + UDP + H(+). It participates in bacterial outer membrane biogenesis; LPS lipid A biosynthesis. Condensation of UDP-2,3-diacylglucosamine and 2,3-diacylglucosamine-1-phosphate to form lipid A disaccharide, a precursor of lipid A, a phosphorylated glycolipid that anchors the lipopolysaccharide to the outer membrane of the cell. This Coxiella burnetii (strain CbuG_Q212) (Coxiella burnetii (strain Q212)) protein is Lipid-A-disaccharide synthase.